The sequence spans 258 residues: Sugar fermentation stimulation protein homolog (258 aa).

Belongs to the SfsA family.

The polypeptide is Sugar fermentation stimulation protein homolog (Prochlorococcus marinus (strain NATL2A)).